Reading from the N-terminus, the 1026-residue chain is Beta-galactosidase (1026 aa).

The substrate site is built by asparagine 104 and aspartate 203. Aspartate 203 contacts Na(+). Residues glutamate 418, histidine 420, and glutamate 463 each contribute to the Mg(2+) site. Substrate is bound by residues glutamate 463 and 539 to 542; that span reads EYAH. Glutamate 463 serves as the catalytic Proton donor. Glutamate 539 functions as the Nucleophile in the catalytic mechanism. Residue asparagine 599 coordinates Mg(2+). 2 residues coordinate Na(+): phenylalanine 603 and asparagine 606. 2 residues coordinate substrate: asparagine 606 and tryptophan 1002.

This sequence belongs to the glycosyl hydrolase 2 family. In terms of assembly, homotetramer. Mg(2+) serves as cofactor. The cofactor is Na(+).

The enzyme catalyses Hydrolysis of terminal non-reducing beta-D-galactose residues in beta-D-galactosides.. This chain is Beta-galactosidase, found in Erwinia tasmaniensis (strain DSM 17950 / CFBP 7177 / CIP 109463 / NCPPB 4357 / Et1/99).